Here is a 357-residue protein sequence, read N- to C-terminus: Queuosine-tRNA galactosyltransferase (357 aa).

This sequence belongs to the glycosyltransferase 2 family.

The protein resides in the cytoplasm. The enzyme catalyses queuosine(34) in tRNA(Tyr) + UDP-alpha-D-galactose = O-5''-beta-D-galactosylqueuosine(34) in tRNA(Tyr) + UDP + H(+). Glycosyltransferase that specifically catalyzes galactosylation of cytoplasmic tRNA(Tyr) modified with queuosine at position 34 (queuosine(34)). Galactosylates the cyclopentene hydroxyl group of queuosine(34) in tRNA(Tyr) to form galactosyl-queuosine(34). Mannosylation of queuosine(34) in tRNA(Tyr) is required to slow-down elongation at cognate codons UAC and suppress stop codon readthrough, thereby regulating protein translation. This Mus musculus (Mouse) protein is Queuosine-tRNA galactosyltransferase.